An 81-amino-acid polypeptide reads, in one-letter code: Photosystem I iron-sulfur center (81 aa).

4Fe-4S ferredoxin-type domains are found at residues A2–W31 and I39–Y68. [4Fe-4S] cluster-binding residues include C11, C14, C17, C21, C48, C51, C54, and C58.

In terms of assembly, the eukaryotic PSI reaction center is composed of at least 11 subunits. [4Fe-4S] cluster is required as a cofactor.

Its subcellular location is the plastid. It localises to the chloroplast thylakoid membrane. The catalysed reaction is reduced [plastocyanin] + hnu + oxidized [2Fe-2S]-[ferredoxin] = oxidized [plastocyanin] + reduced [2Fe-2S]-[ferredoxin]. Functionally, apoprotein for the two 4Fe-4S centers FA and FB of photosystem I (PSI); essential for photochemical activity. FB is the terminal electron acceptor of PSI, donating electrons to ferredoxin. The C-terminus interacts with PsaA/B/D and helps assemble the protein into the PSI complex. Required for binding of PsaD and PsaE to PSI. PSI is a plastocyanin/cytochrome c6-ferredoxin oxidoreductase, converting photonic excitation into a charge separation, which transfers an electron from the donor P700 chlorophyll pair to the spectroscopically characterized acceptors A0, A1, FX, FA and FB in turn. The sequence is that of Photosystem I iron-sulfur center from Pyropia yezoensis (Susabi-nori).